An 866-amino-acid polypeptide reads, in one-letter code: Dynamin-2 (866 aa).

Positions 28 to 294 constitute a Dynamin-type G domain; the sequence is HLDLPQIAVV…LTNHIRESLP (267 aa). Positions 38–45 are G1 motif; that stretch reads GGQSAGKS. Residues S41, G43, K44, S45, S46, R59, and G60 each contribute to the GDP site. The interval 64 to 66 is G2 motif; the sequence is VTR. The interval 136-139 is G3 motif; sequence DLPG. Positions 205–208 are G4 motif; that stretch reads TKLD. K206, D208, and D211 together coordinate GDP. The residue at position 231 (Y231) is a Phosphotyrosine. The tract at residues 235 to 238 is G5 motif; that stretch reads VNRS. Residues N236, R237, and Q239 each coordinate GDP. N6-acetyllysine is present on K299. One can recognise a PH domain in the interval 515 to 621; that stretch reads QVIRRGWLTI…WKASFLRAGV (107 aa). Phosphotyrosine is present on Y593. K594 is modified (N6-acetyllysine). The GED domain occupies 649–740; it reads VETIRNLVDS…IIGDISTSTV (92 aa). The segment at 737–866 is disordered; the sequence is TSTVSTPVPP…IRPAEPSLLD (130 aa). T751 carries the phosphothreonine modification. A compositionally biased stretch (polar residues) spans 752–763; that stretch reads WIQNTSSHSPTP. At S760 the chain carries Phosphoserine; by CDK1. Pro residues-rich tracts occupy residues 784-794, 802-811, and 822-851; these read TPGPPLIPVPV, PPIPSRPGPH, and SAPP…PAAP.

It belongs to the TRAFAC class dynamin-like GTPase superfamily. Dynamin/Fzo/YdjA family. In terms of assembly, oligomerizes into a helical polymer that self-assembles around the vesicle membrane, when associated to the menbrane through lipid binding. Interacts with SHANK1 and SHANK2. Interacts with SNX9. Interacts (via C-terminal proline-rich domain (PRD)) with SNX18 (via SH3 domain); this interaction regulates ATG9A and ATG16L1 trafficking from recycling endosomes to sites of autophagosome formation. Interacts with SNX33 (via SH3 domain). Interacts with MYO1E (via SH3 domain). Interacts with PSTPIP1 (via SH3 domain). Interacts with CTNND2. Interacts (via C-terminal proline-rich domain (PRD)) with BIN1 (via SH3 domain); this interaction allows the recruitment of DNM2 to the membrane tubules and inhibits self-assembly-stimulated GTPase activity on the membrane. Interacts with GABARAP, GABARAPL1 and GABARAPL2. Interacts with MAP1LC3B (the lipidate and non-lipidated LC3 form); this interaction mediates recycling endosome scission leading to autophagosome release. Interacts with ITSN1. Interacts with MYOF. Interacts (via C-terminal proline-rich domain (PRD)) with SH3BP4 (via SH3 domain); this interaction controls the GTPase activity and is prevented by EGFR-induced tyrosine phosphorylation of either DNM2 or SH3BP4. May interact with PIK3C3. May be a component of a complex composed of RAB5A (in GDP-bound form), DYN2 and PIK3C3. Interacts with SDC4; this interaction is markedly enhanced at focal ahesion site upon induction of focal adhesions and stress-fiber formation. Interacts with ACTN1. Interacts with CTTN; this interaction stimulates the intrinsic GTPase activity of DNM2 and stabilizes the association of DNM2 and actin filaments; in addition this interaction is stimulated by ligand binding to the receptor, leading to the recruitment of the DNM2-CTTN complex to the sequestered receptor-ligand complex to its internalization. Interacts with NOSTRIN (via SH3 domain); this interaction allows the recruitment of NOS3 to dynamin-positive structures. Interacts with TUBG1; this interaction may participate in centrosome cohesion. Phosphorylation at Ser-844 by GSK3-alpha relieves the inhibition of BIN1 and promotes endocytosis. Phosphorylation at Ser-760 by CDK1 is greatly increased upon mitotic entry. It regulates cytokinesis downstream of calcineurin, and does not affect clathrin-mediated endocytosis. Dephosphorylated by calcineurin/PP2 during cytokinesis in a Ca(2+)- and calmodulin-dependent manner. Phosphorylated on tyrosine residues by EGFR and after activation of SRC.

It localises to the cytoplasm. Its subcellular location is the cytoskeleton. The protein resides in the cytoplasmic vesicle. The protein localises to the clathrin-coated vesicle. It is found in the cell projection. It localises to the uropodium. Its subcellular location is the endosome. The protein resides in the microtubule organizing center. The protein localises to the centrosome. It is found in the centriole. It localises to the recycling endosome. Its subcellular location is the phagocytic cup. The protein resides in the phagosome membrane. The protein localises to the podosome. It is found in the cell junction. It localises to the postsynaptic density. Its subcellular location is the synapse. The protein resides in the synaptosome. The protein localises to the midbody. It is found in the membrane. It localises to the clathrin-coated pit. The enzyme catalyses GTP + H2O = GDP + phosphate + H(+). Its function is as follows. Catalyzes the hydrolysis of GTP and utilizes this energy to mediate vesicle scission at plasma membrane during endocytosis and filament remodeling at many actin structures during organization of the actin cytoskeleton. Plays an important role in vesicular trafficking processes, namely clathrin-mediated endocytosis (CME), exocytic and clathrin-coated vesicle from the trans-Golgi network, and PDGF stimulated macropinocytosis. During vesicular trafficking process, associates to the membrane, through lipid binding, and self-assembles into ring-like structure through oligomerization to form a helical polymer around the vesicle membrane and leading to vesicle scission. Plays a role in organization of the actin cytoskeleton by mediating arrangement of stress fibers and actin bundles in podocytes. During organization of the actin cytoskeleton, self-assembles into ring-like structure that directly bundles actin filaments to form typical membrane tubules decorated with dynamin spiral polymers. Self-assembly increases GTPase activity and the GTP hydrolysis causes the rapid depolymerization of dynamin spiral polymers, and results in dispersion of actin bundles. Remodels, through its interaction with CTTN, bundled actin filaments in a GTPase-dependent manner and plays a role in orchestrating the global actomyosin cytoskeleton. The interaction with CTTN stabilizes the interaction of DNM2 and actin filaments and stimulates the intrinsic GTPase activity that results in actin filament-barbed ends and increases the sensitivity of filaments in bundles to the actin depolymerizing factor, CFL1. Plays a role in the autophagy process, by participating in the formation of ATG9A vesicles destined for the autophagosomes through its interaction with SNX18, by mediating recycling endosome scission leading to autophagosome release through MAP1LC3B interaction. Also regulates maturation of apoptotic cell corpse-containing phagosomes by recruiting PIK3C3 to the phagosome membrane. Also plays a role in cytokinesis. May participate in centrosome cohesion through its interaction with TUBG1. Plays a role in the regulation of neuron morphology, axon growth and formation of neuronal growth cones. Involved in membrane tubulation. In Bos taurus (Bovine), this protein is Dynamin-2.